The primary structure comprises 895 residues: uncharacterized protein (895 aa).

2 to 19 (NISVIGTGYVGLIQAVGL) contacts NAD(+). Cys261 is an active-site residue. In terms of domain architecture, DOD-type homing endonuclease spans 468–614 (LIGYYLSEGW…LLILLQLLGI (147 aa)).

Belongs to the UDP-glucose/GDP-mannose dehydrogenase family. In terms of processing, this protein undergoes a protein self splicing that involves a post-translational excision of the intervening region (intein) followed by peptide ligation.

This is an uncharacterized protein from Methanocaldococcus jannaschii (strain ATCC 43067 / DSM 2661 / JAL-1 / JCM 10045 / NBRC 100440) (Methanococcus jannaschii).